A 268-amino-acid chain; its full sequence is Myeloid leukemia factor 1 (268 aa).

3 positions are modified to phosphoserine: Ser8, Ser32, and Ser34. Disordered regions lie at residues 44 to 66 and 209 to 268; these read ISDG…SLTH and GRHN…SNKK. The tract at residues 50 to 125 is interaction with COPS3; sequence RAHNRRGHND…IGDEPPKVFQ (76 aa). Basic and acidic residues-rich tracts occupy residues 56–65 and 226–237; these read GHNDGEDSLT and PGSRELKRREKP.

It belongs to the MLF family. As to quaternary structure, interacts with CENPU. Also interacts with NRBP1/MADM, YWHAZ/14-3-3-zeta and HNRPUL2/MANP. NRBP1 recruits a serine kinase which phosphorylates both itself and MLF1. Phosphorylated MLF1 then binds to YWHAZ and is retained in the cytoplasm. Retained in the nucleus by binding to HNRPUL2. Binds to COPS3/CSN3 which is required for suppression of COP1 and activation of p53. Post-translationally, phosphorylation is required for binding to YWHAZ. In terms of tissue distribution, most abundant in testis, ovary, skeletal muscle, heart, kidney and colon. Low expression in spleen, thymus and peripheral blood leukocytes.

The protein localises to the cytoplasm. It is found in the nucleus. It localises to the cell projection. Its subcellular location is the cilium. The protein resides in the cytoskeleton. The protein localises to the cilium basal body. In terms of biological role, involved in lineage commitment of primary hemopoietic progenitors by restricting erythroid formation and enhancing myeloid formation. Interferes with erythropoietin-induced erythroid terminal differentiation by preventing cells from exiting the cell cycle through suppression of CDKN1B/p27Kip1 levels. Suppresses COP1 activity via CSN3 which activates p53 and induces cell cycle arrest. Binds DNA and affects the expression of a number of genes so may function as a transcription factor in the nucleus. The chain is Myeloid leukemia factor 1 (MLF1) from Homo sapiens (Human).